The chain runs to 549 residues: FMRFamide receptor (549 aa).

Residues M1–G117 lie on the Extracellular side of the membrane. N-linked (GlcNAc...) asparagine glycans are attached at residues N59, N70, and N93. The chain crosses the membrane as a helical span at residues V118–L138. Topologically, residues S139 to D158 are cytoplasmic. The chain crosses the membrane as a helical span at residues T159–G179. Residues H180–F181 are Extracellular-facing. A helical membrane pass occupies residues F182–I202. Topologically, residues A203–K238 are cytoplasmic. A helical membrane pass occupies residues I239–V259. At L260–N289 the chain is on the extracellular side. Residues I290 to I310 form a helical membrane-spanning segment. At L311–T341 the chain is on the cytoplasmic side. The helical transmembrane segment at M342–I362 threads the bilayer. Topologically, residues S363 to K376 are extracellular. The helical transmembrane segment at I377–G397 threads the bilayer. At E398–F549 the chain is on the cytoplasmic side.

Belongs to the G-protein coupled receptor 1 family. Expressed in ovaries, heads and bodies. Expressed in dopaminergic neurons.

It localises to the cell membrane. A receptor for the FMRFamide peptides. Reacts with high affinity to FMRFamide and intrinsic FMRFamide-related peptides. By stimulating intracellular calcium signaling through the inositol 1,4,5-trisphosphate receptor, Itpr, in dopaminergic neurons, may be involved in the maintenance of neuronal excitability and in the regulation of flight bout duration. This Drosophila melanogaster (Fruit fly) protein is FMRFamide receptor.